The primary structure comprises 133 residues: Putative pre-16S rRNA nuclease (133 aa).

This sequence belongs to the YqgF nuclease family.

The protein resides in the cytoplasm. In terms of biological role, could be a nuclease involved in processing of the 5'-end of pre-16S rRNA. The polypeptide is Putative pre-16S rRNA nuclease (Dehalococcoides mccartyi (strain ATCC BAA-2266 / KCTC 15142 / 195) (Dehalococcoides ethenogenes (strain 195))).